Here is a 284-residue protein sequence, read N- to C-terminus: Probable endonuclease 4 (284 aa).

H69, H113, E148, D182, H185, H217, D230, H232, and E262 together coordinate Zn(2+).

This sequence belongs to the AP endonuclease 2 family. Zn(2+) is required as a cofactor.

It catalyses the reaction Endonucleolytic cleavage to 5'-phosphooligonucleotide end-products.. Functionally, endonuclease IV plays a role in DNA repair. It cleaves phosphodiester bonds at apurinic or apyrimidinic (AP) sites, generating a 3'-hydroxyl group and a 5'-terminal sugar phosphate. This is Probable endonuclease 4 from Bifidobacterium longum subsp. infantis (strain ATCC 15697 / DSM 20088 / JCM 1222 / NCTC 11817 / S12).